The following is a 121-amino-acid chain: Large ribosomal subunit protein uL14 (121 aa).

Belongs to the universal ribosomal protein uL14 family. In terms of assembly, part of the 50S ribosomal subunit. Forms a cluster with proteins L3 and L19. In the 70S ribosome, L14 and L19 interact and together make contacts with the 16S rRNA in bridges B5 and B8.

Functionally, binds to 23S rRNA. Forms part of two intersubunit bridges in the 70S ribosome. This Prochlorococcus marinus (strain MIT 9515) protein is Large ribosomal subunit protein uL14.